A 145-amino-acid polypeptide reads, in one-letter code: D-aminoacyl-tRNA deacylase (145 aa).

The short motif at 137-138 is the Gly-cisPro motif, important for rejection of L-amino acids element; sequence GP.

It belongs to the DTD family. Homodimer.

It localises to the cytoplasm. It catalyses the reaction glycyl-tRNA(Ala) + H2O = tRNA(Ala) + glycine + H(+). It carries out the reaction a D-aminoacyl-tRNA + H2O = a tRNA + a D-alpha-amino acid + H(+). Its function is as follows. An aminoacyl-tRNA editing enzyme that deacylates mischarged D-aminoacyl-tRNAs. Also deacylates mischarged glycyl-tRNA(Ala), protecting cells against glycine mischarging by AlaRS. Acts via tRNA-based rather than protein-based catalysis; rejects L-amino acids rather than detecting D-amino acids in the active site. By recycling D-aminoacyl-tRNA to D-amino acids and free tRNA molecules, this enzyme counteracts the toxicity associated with the formation of D-aminoacyl-tRNA entities in vivo and helps enforce protein L-homochirality. In Psychromonas ingrahamii (strain DSM 17664 / CCUG 51855 / 37), this protein is D-aminoacyl-tRNA deacylase.